A 302-amino-acid chain; its full sequence is Ribosomal RNA small subunit methyltransferase H (302 aa).

Residues 34–36, aspartate 53, phenylalanine 80, aspartate 101, and glutamine 108 each bind S-adenosyl-L-methionine; that span reads AGH. The segment at 283–302 is disordered; that stretch reads LEENPRSKSAKMRVLKKIER. Over residues 290 to 302 the composition is skewed to basic residues; it reads KSAKMRVLKKIER.

It belongs to the methyltransferase superfamily. RsmH family.

The protein localises to the cytoplasm. It carries out the reaction cytidine(1402) in 16S rRNA + S-adenosyl-L-methionine = N(4)-methylcytidine(1402) in 16S rRNA + S-adenosyl-L-homocysteine + H(+). Specifically methylates the N4 position of cytidine in position 1402 (C1402) of 16S rRNA. This Mycoplasma mobile (strain ATCC 43663 / 163K / NCTC 11711) (Mesomycoplasma mobile) protein is Ribosomal RNA small subunit methyltransferase H.